The following is a 399-amino-acid chain: Nicotinate phosphoribosyltransferase 1 (399 aa).

His224 bears the Phosphohistidine; by autocatalysis mark.

Belongs to the NAPRTase family. Transiently phosphorylated on a His residue during the reaction cycle. Phosphorylation strongly increases the affinity for substrates and increases the rate of nicotinate D-ribonucleotide production. Dephosphorylation regenerates the low-affinity form of the enzyme, leading to product release.

The enzyme catalyses nicotinate + 5-phospho-alpha-D-ribose 1-diphosphate + ATP + H2O = nicotinate beta-D-ribonucleotide + ADP + phosphate + diphosphate. Its pathway is cofactor biosynthesis; NAD(+) biosynthesis; nicotinate D-ribonucleotide from nicotinate: step 1/1. Its function is as follows. Catalyzes the synthesis of beta-nicotinate D-ribonucleotide from nicotinate and 5-phospho-D-ribose 1-phosphate at the expense of ATP. The polypeptide is Nicotinate phosphoribosyltransferase 1 (Pseudomonas aeruginosa (strain ATCC 15692 / DSM 22644 / CIP 104116 / JCM 14847 / LMG 12228 / 1C / PRS 101 / PAO1)).